The chain runs to 449 residues: Packaging protein 1 (449 aa).

The disordered stretch occupies residues 1–77 (METRGRRPAA…QPAKRGDMLD (77 aa)). 171 to 178 (GPTGCGKS) provides a ligand contact to ATP. Residues 440-449 (RAYRARKTPK) are DNA-binding.

It belongs to the adenoviridae packaging protein 1 family. As to quaternary structure, homodimer. Part of a genome packaging complex composed of packaging proteins 1, 2 and 3; this complex specifically binds to the packaging sequence on the left end of viral genomic DNA and performs packaging of the viral genome. Interacts with protein 33K.

It is found in the virion. It localises to the host nucleus. Its subcellular location is the host nucleoplasm. The protein localises to the host nucleolus. Its function is as follows. Component of the packaging machinery which encapsidates the viral DNA into preformed capsids and transcriptional activator of the viral major late promoter (MLP). Binds, along with packaging proteins 2 and 3, to the specific packaging sequence on the left end of viral genomic DNA and displays ATPase activity thereby providing the power stroke of the packaging machinery. The activity of packaging protein IVa2 is stimulated by protein 33K which acts as a terminase. May be the protein that pumps DNA into the capsid powered by ATP hydrolysis. Specifically binds to the 5'-CG-3' nucleotides of the repeats making up the packaging sequence. Component of the DEF-A and DEF-B transcription factors that bind downstream elements of the major late promoter (MLP), and stimulate transcription from the MLP after initiation of viral DNA replication. DEF-A is a heterodimer packaging proteins 1 and 2 and DEF-B is a homodimer of packaging protein 1. The protein is Packaging protein 1 of Homo sapiens (Human).